The sequence spans 108 residues: PTS system galactose-specific EIIB component (108 aa).

Residues 3-108 (DKVIALACAA…VLAAAENLMN (106 aa)) enclose the PTS EIIB type-3 domain. The Phosphocysteine intermediate role is filled by Cys-10. A Phosphocysteine; by EIIA modification is found at Cys-10.

It carries out the reaction N(pros)-phospho-L-histidyl-[protein] + D-galactose(out) = D-galactose 6-phosphate(in) + L-histidyl-[protein]. Its function is as follows. The phosphoenolpyruvate-dependent sugar phosphotransferase system (sugar PTS), a major carbohydrate active transport system, catalyzes the phosphorylation of incoming sugar substrates concomitantly with their translocation across the cell membrane. Involved in galactose transport with PtcA and Lmg_0963. This Lactococcus lactis subsp. cremoris (strain MG1363) protein is PTS system galactose-specific EIIB component.